Consider the following 468-residue polypeptide: Glutamate--tRNA ligase (468 aa).

Positions 10-20 (PSPTGYLHIGG) match the 'HIGH' region motif. Residues 252-256 (KLSKR) carry the 'KMSKS' region motif. ATP is bound at residue Lys-255.

The protein belongs to the class-I aminoacyl-tRNA synthetase family. Glutamate--tRNA ligase type 1 subfamily. Monomer.

The protein localises to the cytoplasm. It carries out the reaction tRNA(Glu) + L-glutamate + ATP = L-glutamyl-tRNA(Glu) + AMP + diphosphate. In terms of biological role, catalyzes the attachment of glutamate to tRNA(Glu) in a two-step reaction: glutamate is first activated by ATP to form Glu-AMP and then transferred to the acceptor end of tRNA(Glu). This Mycoplasmopsis pulmonis (strain UAB CTIP) (Mycoplasma pulmonis) protein is Glutamate--tRNA ligase.